A 204-amino-acid polypeptide reads, in one-letter code: Somatotropin (204 aa).

The N-terminal stretch at 1–17 is a signal peptide; sequence MDKVLFLLFVLSLGVSS. Gln18 is subject to Pyrrolidone carboxylic acid. His36 contributes to the Zn(2+) binding site. A disulfide bond links Cys69 and Cys177. Glu186 contacts Zn(2+). A disulfide bond links Cys194 and Cys202.

The protein belongs to the somatotropin/prolactin family.

The protein resides in the secreted. Its function is as follows. Growth hormone plays an important role in growth control and is involved in the regulation of several anabolic processes. Implicated as an osmoregulatory substance important for seawater adaptation. This is Somatotropin (gh) from Trichopodus trichopterus (Three spot gourami).